The sequence spans 596 residues: Protein FlbA (596 aa).

4 TPR repeats span residues 91-124 (GLAW…LPDH), 159-192 (VEGA…NPEA), 193-226 (AVLW…APDF), and 228-260 (KAYH…PGSP).

This is Protein FlbA (flbA) from Caulobacter vibrioides (strain ATCC 19089 / CIP 103742 / CB 15) (Caulobacter crescentus).